Here is a 179-residue protein sequence, read N- to C-terminus: UPF0227 protein Shew185_2404 (179 aa).

Belongs to the UPF0227 family.

The polypeptide is UPF0227 protein Shew185_2404 (Shewanella baltica (strain OS185)).